The sequence spans 148 residues: Deoxyuridine 5'-triphosphate nucleotidohydrolase (148 aa).

Residues 68 to 70 (RSG), asparagine 81, 85 to 87 (TID), and lysine 95 each bind substrate.

It belongs to the dUTPase family. It depends on Mg(2+) as a cofactor.

The enzyme catalyses dUTP + H2O = dUMP + diphosphate + H(+). The protein operates within pyrimidine metabolism; dUMP biosynthesis; dUMP from dCTP (dUTP route): step 2/2. This enzyme is involved in nucleotide metabolism: it produces dUMP, the immediate precursor of thymidine nucleotides and it decreases the intracellular concentration of dUTP so that uracil cannot be incorporated into DNA. This Rickettsia felis (strain ATCC VR-1525 / URRWXCal2) (Rickettsia azadi) protein is Deoxyuridine 5'-triphosphate nucleotidohydrolase.